Here is a 104-residue protein sequence, read N- to C-terminus: Large ribosomal subunit protein uL24 (104 aa).

The protein belongs to the universal ribosomal protein uL24 family. As to quaternary structure, part of the 50S ribosomal subunit.

In terms of biological role, one of two assembly initiator proteins, it binds directly to the 5'-end of the 23S rRNA, where it nucleates assembly of the 50S subunit. One of the proteins that surrounds the polypeptide exit tunnel on the outside of the subunit. In Saccharopolyspora erythraea (strain ATCC 11635 / DSM 40517 / JCM 4748 / NBRC 13426 / NCIMB 8594 / NRRL 2338), this protein is Large ribosomal subunit protein uL24.